The primary structure comprises 2294 residues: Protein Ycf2 (2294 aa).

An ATP-binding site is contributed by Gly1648 to Ser1655.

The protein belongs to the Ycf2 family.

It localises to the plastid. It is found in the chloroplast stroma. In terms of biological role, probable ATPase of unknown function. Its presence in a non-photosynthetic plant (Epifagus virginiana) and experiments in tobacco indicate that it has an essential function which is probably not related to photosynthesis. In Arabidopsis thaliana (Mouse-ear cress), this protein is Protein Ycf2.